The chain runs to 345 residues: UDP-N-acetylenolpyruvoylglucosamine reductase (345 aa).

In terms of domain architecture, FAD-binding PCMH-type spans 25–193 (LPAHCTDFVS…VGVTFLLPKA (169 aa)). R169 is a catalytic residue. The Proton donor role is filled by S237. E333 is an active-site residue.

It belongs to the MurB family. FAD serves as cofactor.

The protein localises to the cytoplasm. The enzyme catalyses UDP-N-acetyl-alpha-D-muramate + NADP(+) = UDP-N-acetyl-3-O-(1-carboxyvinyl)-alpha-D-glucosamine + NADPH + H(+). The protein operates within cell wall biogenesis; peptidoglycan biosynthesis. Its function is as follows. Cell wall formation. This Pseudoalteromonas atlantica (strain T6c / ATCC BAA-1087) protein is UDP-N-acetylenolpyruvoylglucosamine reductase.